Here is a 327-residue protein sequence, read N- to C-terminus: Interleukin-12 subunit beta (327 aa).

The first 22 residues, 1-22, serve as a signal peptide directing secretion; sequence MCHQKLTISWFAVVLLASPLMA. Residues 23 to 106 enclose the Ig-like C2-type domain; sequence IWELEKDVYV…LSHSRLLLHK (84 aa). A disulfide bridge links C50 with C90. 4 N-linked (GlcNAc...) asparagine glycosylation sites follow: N125, N135, N223, and N315. Residues 238-327 form the Fibronectin type-III domain; sequence PPKNLQLKPL…WSRWVSVPCS (90 aa).

The protein belongs to the IL-12B family. In terms of assembly, heterodimer with IL12A; disulfide-linked. The heterodimer is known as interleukin IL-12. Heterodimer with IL23A; disulfide-linked. The heterodimer is known as interleukin IL-23. Also secreted as a monomer. Interacts with NBR1; this interaction promotes IL-12 secretion.

The protein localises to the secreted. Cytokine that can act as a growth factor for activated T and NK cells, enhance the lytic activity of NK/lymphokine-activated killer cells, and stimulate the production of IFN-gamma by resting PBMC. In terms of biological role, associates with IL23A to form the IL-23 interleukin, a heterodimeric cytokine which functions in innate and adaptive immunity. IL-23 may constitute with IL-17 an acute response to infection in peripheral tissues. IL-23 binds to a heterodimeric receptor complex composed of IL12RB1 and IL23R, activates the Jak-Stat signaling cascade, stimulates memory rather than naive T-cells and promotes production of pro-inflammatory cytokines. IL-23 induces autoimmune inflammation and thus may be responsible for autoimmune inflammatory diseases and may be important for tumorigenesis. This Mesocricetus auratus (Golden hamster) protein is Interleukin-12 subunit beta (IL12B).